We begin with the raw amino-acid sequence, 250 residues long: N-acyl homoserine lactonase (250 aa).

Zn(2+)-binding residues include histidine 104, histidine 106, aspartate 108, histidine 109, histidine 169, aspartate 191, and histidine 235.

It belongs to the metallo-beta-lactamase superfamily. Monomer. Zn(2+) is required as a cofactor.

It catalyses the reaction an N-acyl-L-homoserine lactone + H2O = an N-acyl-L-homoserine + H(+). Its function is as follows. Catalyzes hydrolysis of N-hexanoyl-(S)-homoserine lactone, but not the R-enantiomer. Hydrolyzes short- and long-chain N-acyl homoserine lactones with or without 3-oxo substitution at C3, has maximum activity on C10-AHL. This is N-acyl homoserine lactonase from Bacillus thuringiensis subsp. indiana.